Reading from the N-terminus, the 271-residue chain is MASEFKKKLFWRAVVAEFLAMILFVFISIGSALGFNYPVRNNQTAGAAQDNVKVSLAFGLSIATLAQSVGHISGAHLNPAVTLGLLLSCQISILRAVMYIIAQCVGAIVATAILSGITSSLPDNSLGRNELAPGVNSGQGLGIEIIGTLQLVLCVLATTDRRRRDLGGSGPLAIGLSVALGHLLAIDYTGCGINPARSFGSSVITHNFKDHWIFWVGPFIGGALAVLIYDFILAPRSSDLTDRVKVWTSGQVEEYELDGDDINSRVEMKPK.

The Cytoplasmic portion of the chain corresponds to 1 to 11 (MASEFKKKLFW). The chain crosses the membrane as a helical span at residues 12 to 29 (RAVVAEFLAMILFVFISI). The Extracellular portion of the chain corresponds to 30–48 (GSALGFNYPVRNNQTAGAA). Asparagine 42 carries an N-linked (GlcNAc...) asparagine glycan. Residues 49–67 (QDNVKVSLAFGLSIATLAQ) traverse the membrane as a helical segment. Residues 68-70 (SVG) lie on the Cytoplasmic side of the membrane. The stretch at 71–84 (HISGAHLNPAVTLG) is an intramembrane region. The NPA 1 signature appears at 78–80 (NPA). At 85–92 (LLLSCQIS) the chain is on the cytoplasmic side. The chain crosses the membrane as a helical span at residues 93 to 111 (ILRAVMYIIAQCVGAIVAT). Residues 112–135 (AILSGITSSLPDNSLGRNELAPGV) are Extracellular-facing. Residues 136 to 155 (NSGQGLGIEIIGTLQLVLCV) form a helical membrane-spanning segment. The Cytoplasmic portion of the chain corresponds to 156-165 (LATTDRRRRD). The helical transmembrane segment at 166-183 (LGGSGPLAIGLSVALGHL) threads the bilayer. Over 184-188 (LAIDY) the chain is Extracellular. An intramembrane segment occupies 189-201 (TGCGINPARSFGS). The NPA 2 motif lies at 194 to 196 (NPA). Residues 202–208 (SVITHNF) are Extracellular-facing. Residues 209–226 (KDHWIFWVGPFIGGALAV) form a helical membrane-spanning segment. Topologically, residues 227 to 271 (LIYDFILAPRSSDLTDRVKVWTSGQVEEYELDGDDINSRVEMKPK) are cytoplasmic. A Phosphoserine modification is found at serine 249. Tyrosine 255 is modified (phosphotyrosine). A Phosphoserine modification is found at serine 264.

Belongs to the MIP/aquaporin (TC 1.A.8) family. In terms of assembly, homotetramer; each monomer provides an independent water pore. Component of the ankyrin-1 complex in the erythrocyte, composed of ANK1, RHCE, RHAG, SLC4A1, EPB42, GYPA, GYPB and AQP1. Interacts with EPHB2; involved in endolymph production in the inner ear. Identified in a complex with STOM. Interacts (via the N-terminal) with ANK1 (via ANK 1-5 repeats). Interacts (via the C-terminal) with EPB42.

Its subcellular location is the cell membrane. The catalysed reaction is H2O(in) = H2O(out). The enzyme catalyses nitric oxide(out) = nitric oxide(in). It catalyses the reaction CO2(out) = CO2(in). It carries out the reaction glycerol(in) = glycerol(out). The catalysed reaction is H2O2(out) = H2O2(in). The enzyme catalyses K(+)(in) = K(+)(out). It catalyses the reaction Na(+)(in) = Na(+)(out). Its function is as follows. Forms a water channel that facilitates the transport of water across cell membranes, playing a crucial role in water homeostasis in various tissues. Could also be permeable to small solutes including hydrogen peroxide, glycerol and gases such as amonnia (NH3), nitric oxide (NO) and carbon dioxide (CO2). Recruited to the ankyrin-1 complex, a multiprotein complex of the erythrocyte membrane, it could be part of a CO2 metabolon, linking facilitated diffusion of CO2 across the membrane, anion exchange of Cl(-)/HCO3(-) and interconversion of dissolved CO2 and carbonic acid in the cytosol. In vitro, it shows non-selective gated cation channel activity and may be permeable to cations like K(+) and Na(+) in vivo. The polypeptide is Aquaporin-1 (Canis lupus familiaris (Dog)).